Consider the following 157-residue polypeptide: ATP synthase subunit b' (157 aa).

The chain crosses the membrane as a helical span at residues 22–42 (ATLPLIAIQFLLLVAVLNSLF).

Belongs to the ATPase B chain family. F-type ATPases have 2 components, F(1) - the catalytic core - and F(0) - the membrane proton channel. F(1) has five subunits: alpha(3), beta(3), gamma(1), delta(1), epsilon(1). F(0) has four main subunits: a(1), b(1), b'(1) and c(10-14). The alpha and beta chains form an alternating ring which encloses part of the gamma chain. F(1) is attached to F(0) by a central stalk formed by the gamma and epsilon chains, while a peripheral stalk is formed by the delta, b and b' chains.

The protein localises to the cellular thylakoid membrane. F(1)F(0) ATP synthase produces ATP from ADP in the presence of a proton or sodium gradient. F-type ATPases consist of two structural domains, F(1) containing the extramembraneous catalytic core and F(0) containing the membrane proton channel, linked together by a central stalk and a peripheral stalk. During catalysis, ATP synthesis in the catalytic domain of F(1) is coupled via a rotary mechanism of the central stalk subunits to proton translocation. In terms of biological role, component of the F(0) channel, it forms part of the peripheral stalk, linking F(1) to F(0). The b'-subunit is a diverged and duplicated form of b found in plants and photosynthetic bacteria. The protein is ATP synthase subunit b' of Synechococcus sp. (strain JA-2-3B'a(2-13)) (Cyanobacteria bacterium Yellowstone B-Prime).